A 43-amino-acid polypeptide reads, in one-letter code: Protein PsbN (43 aa).

A helical membrane pass occupies residues 5–27 (TLVAISISGLLVSFTGYALYTAF).

This sequence belongs to the PsbN family.

It is found in the plastid. It localises to the chloroplast thylakoid membrane. In terms of biological role, may play a role in photosystem I and II biogenesis. The chain is Protein PsbN from Coelogyne cristata (Orchid).